The sequence spans 358 residues: Probable translocation protein Y4yK (358 aa).

The protein belongs to the FliN/MopA/SpaO family.

Could be involved in the secretion of an unknown factor. The sequence is that of Probable translocation protein Y4yK from Sinorhizobium fredii (strain NBRC 101917 / NGR234).